The sequence spans 271 residues: Mannosyl-3-phosphoglycerate phosphatase (271 aa).

Asp13 functions as the Nucleophile in the catalytic mechanism. Positions 13, 15, and 214 each coordinate Mg(2+).

This sequence belongs to the HAD-like hydrolase superfamily. MPGP family. It depends on Mg(2+) as a cofactor.

The protein resides in the cytoplasm. The catalysed reaction is 2-O-(alpha-D-mannosyl)-3-phosphoglycerate + H2O = (2R)-2-O-(alpha-D-mannosyl)-glycerate + phosphate. In Shigella sonnei (strain Ss046), this protein is Mannosyl-3-phosphoglycerate phosphatase (yedP).